The sequence spans 342 residues: Renalase (342 aa).

A signal peptide spans 1–17; sequence MSRVLVVGAGLTGSLCA. FAD-binding positions include Thr-12, Arg-42, and 61–62; that span reads QY.

The protein belongs to the renalase family. FAD serves as cofactor. As to expression, expressed predominantly in kidney and testis with lower levels in liver, heart and embryo and weak expression in brain and skeletal muscle.

It localises to the secreted. It catalyses the reaction 1,2-dihydro-beta-NAD + O2 + H(+) = H2O2 + NAD(+). The catalysed reaction is 1,2-dihydro-beta-NADP + O2 + H(+) = H2O2 + NADP(+). The enzyme catalyses 1,6-dihydro-beta-NADP + O2 + H(+) = H2O2 + NADP(+). It carries out the reaction 1,6-dihydro-beta-NAD + O2 + H(+) = H2O2 + NAD(+). Functionally, catalyzes the oxidation of the less abundant 1,2-dihydro-beta-NAD(P) and 1,6-dihydro-beta-NAD(P) to form beta-NAD(P)(+). The enzyme hormone is secreted by the kidney, and circulates in blood and modulates cardiac function and systemic blood pressure. Lowers blood pressure in vivo by decreasing cardiac contractility and heart rate and preventing a compensatory increase in peripheral vascular tone, suggesting a causal link to the increased plasma catecholamine and heightened cardiovascular risk. High concentrations of catecholamines activate plasma renalase and promotes its secretion and synthesis. In Mus musculus (Mouse), this protein is Renalase.